The following is a 222-amino-acid chain: Putative RING finger protein ORF118 (222 aa).

The RING-type zinc finger occupies Cys-78–Asn-114. Residues Ile-184–Ile-222 form a disordered region. The span at His-189 to Glu-198 shows a compositional bias: low complexity. Basic residues predominate over residues Pro-209–Ile-222.

This is Putative RING finger protein ORF118 from Magallana gigas (Pacific oyster).